The following is a 134-amino-acid chain: Outer membrane lipoprotein RcsF (134 aa).

A signal peptide spans 1–15 (MRALPICLVALMLSG). A lipid anchor (N-palmitoyl cysteine) is attached at Cys-16. Cys-16 carries the S-diacylglycerol cysteine lipid modification. 2 disordered regions span residues 22–48 (SPVE…RATP) and 67–88 (GEVS…IPTA). The segment covering 72–82 (DSCQASNQDSP) has biased composition (polar residues). 2 disulfides stabilise this stretch: Cys-74–Cys-118 and Cys-109–Cys-124.

It belongs to the RcsF family.

The protein resides in the cell outer membrane. In terms of biological role, essential component of the Rcs signaling system, which controls transcription of numerous genes. Plays a role in signal transduction from the cell surface to the histidine kinase RcsC. May detect outer membrane defects. The polypeptide is Outer membrane lipoprotein RcsF (Escherichia coli O6:H1 (strain CFT073 / ATCC 700928 / UPEC)).